The primary structure comprises 182 residues: Large ribosomal subunit protein bL25 (182 aa).

Belongs to the bacterial ribosomal protein bL25 family. CTC subfamily. Part of the 50S ribosomal subunit; part of the 5S rRNA/L5/L18/L25 subcomplex. Contacts the 5S rRNA. Binds to the 5S rRNA independently of L5 and L18.

Functionally, this is one of the proteins that binds to the 5S RNA in the ribosome where it forms part of the central protuberance. The protein is Large ribosomal subunit protein bL25 of Borreliella burgdorferi (strain ATCC 35210 / DSM 4680 / CIP 102532 / B31) (Borrelia burgdorferi).